The primary structure comprises 232 residues: Lipoprotein-releasing system ATP-binding protein LolD (232 aa).

In terms of domain architecture, ABC transporter spans 11–231 (VYLHDIRRQY…SLENGHVVEL (221 aa)). Residue 47 to 54 (APSGSGKS) participates in ATP binding.

This sequence belongs to the ABC transporter superfamily. Lipoprotein translocase (TC 3.A.1.125) family. As to quaternary structure, the complex is composed of two ATP-binding proteins (LolD) and two transmembrane proteins (LolC and LolE).

It localises to the cell inner membrane. Its function is as follows. Part of the ABC transporter complex LolCDE involved in the translocation of mature outer membrane-directed lipoproteins, from the inner membrane to the periplasmic chaperone, LolA. Responsible for the formation of the LolA-lipoprotein complex in an ATP-dependent manner. The protein is Lipoprotein-releasing system ATP-binding protein LolD of Nitrobacter hamburgensis (strain DSM 10229 / NCIMB 13809 / X14).